A 305-amino-acid chain; its full sequence is Porphobilinogen deaminase (305 aa).

Cysteine 241 bears the S-(dipyrrolylmethanemethyl)cysteine mark.

The protein belongs to the HMBS family. As to quaternary structure, monomer. Dipyrromethane serves as cofactor.

It catalyses the reaction 4 porphobilinogen + H2O = hydroxymethylbilane + 4 NH4(+). Its pathway is porphyrin-containing compound metabolism; protoporphyrin-IX biosynthesis; coproporphyrinogen-III from 5-aminolevulinate: step 2/4. Its function is as follows. Tetrapolymerization of the monopyrrole PBG into the hydroxymethylbilane pre-uroporphyrinogen in several discrete steps. This Exiguobacterium sp. (strain ATCC BAA-1283 / AT1b) protein is Porphobilinogen deaminase.